Reading from the N-terminus, the 690-residue chain is Methionine--tRNA ligase (690 aa).

Positions Pro20–His30 match the 'HIGH' region motif. Cys151, Cys154, Cys164, and Cys167 together coordinate Zn(2+). The 'KMSKS' region signature appears at Lys337–Ser341. Lys340 contributes to the ATP binding site. The tRNA-binding domain occupies Asp589 to Met690.

This sequence belongs to the class-I aminoacyl-tRNA synthetase family. MetG type 1 subfamily. In terms of assembly, homodimer. Requires Zn(2+) as cofactor.

The protein localises to the cytoplasm. It carries out the reaction tRNA(Met) + L-methionine + ATP = L-methionyl-tRNA(Met) + AMP + diphosphate. Its function is as follows. Is required not only for elongation of protein synthesis but also for the initiation of all mRNA translation through initiator tRNA(fMet) aminoacylation. The chain is Methionine--tRNA ligase from Vibrio vulnificus (strain YJ016).